The following is a 140-amino-acid chain: Anti-sigma F factor (140 aa).

This sequence belongs to the anti-sigma-factor family.

The enzyme catalyses L-seryl-[protein] + ATP = O-phospho-L-seryl-[protein] + ADP + H(+). It catalyses the reaction L-threonyl-[protein] + ATP = O-phospho-L-threonyl-[protein] + ADP + H(+). In terms of biological role, binds to sigma F and blocks its ability to form an RNA polymerase holoenzyme (E-sigma F). Phosphorylates SpoIIAA on a serine residue. This phosphorylation may enable SpoIIAA to act as an anti-anti-sigma factor that counteracts SpoIIAB and thus releases sigma F from inhibition. The protein is Anti-sigma F factor of Clostridium perfringens (strain SM101 / Type A).